The chain runs to 141 residues: Galactose-6-phosphate isomerase subunit LacA (141 aa).

The protein belongs to the LacAB/RpiB family. In terms of assembly, heteromultimeric protein consisting of LacA and LacB.

It catalyses the reaction aldehydo-D-galactose 6-phosphate = keto-D-tagatose 6-phosphate. Its pathway is carbohydrate metabolism; D-galactose 6-phosphate degradation; D-tagatose 6-phosphate from D-galactose 6-phosphate: step 1/1. This Streptococcus equi subsp. equi (strain 4047) protein is Galactose-6-phosphate isomerase subunit LacA.